The sequence spans 283 residues: 2-dehydro-3-deoxyphosphooctonate aldolase (283 aa).

Belongs to the KdsA family.

The protein resides in the cytoplasm. The catalysed reaction is D-arabinose 5-phosphate + phosphoenolpyruvate + H2O = 3-deoxy-alpha-D-manno-2-octulosonate-8-phosphate + phosphate. The protein operates within carbohydrate biosynthesis; 3-deoxy-D-manno-octulosonate biosynthesis; 3-deoxy-D-manno-octulosonate from D-ribulose 5-phosphate: step 2/3. It participates in bacterial outer membrane biogenesis; lipopolysaccharide biosynthesis. The chain is 2-dehydro-3-deoxyphosphooctonate aldolase from Prochlorococcus marinus (strain MIT 9313).